The chain runs to 760 residues: Metal transporter cnnm-2 (760 aa).

An N-terminal signal peptide occupies residues 1–21; sequence MIIKVFLRLLLLCAHIVCIDG. At 22–153 the chain is on the extracellular side; the sequence is KLEIRPVVSG…ETFMPVWAQC (132 aa). N-linked (GlcNAc...) asparagine glycosylation is present at Asn88. Residues 145-323 form the CNNM transmembrane domain; the sequence is TFMPVWAQCA…MENDACDIDL (179 aa). Residues 154–174 form a helical membrane-spanning segment; sequence AILCLLFSISALCSGLTLGLM. Residues 175–208 are Cytoplasmic-facing; that stretch reads ALTPQELSILMKSGSQREKKHAAAIYPIRCHGNR. Residues 209–229 traverse the membrane as a helical segment; sequence LLCTVIIMNVIVNTGITLLFD. Residue Asp230 is a topological domain, extracellular. A helical membrane pass occupies residues 231–251; that stretch reads LAEGLIAFVASTVGIVVFGEI. Topologically, residues 252–261 are cytoplasmic; that stretch reads LPQSICVKYG. A helical transmembrane segment spans residues 262–282; the sequence is LAVGANTIFITKFFMFLLFPI. Over 283 to 760 the chain is Extracellular; it reads TWPLGKILDK…SVEELKPLME (478 aa). Residues Asn302 and Asn403 are each glycosylated (N-linked (GlcNAc...) asparagine). CBS domains follow at residues 344-406 and 442-512; these read MTDI…NITV and MVAK…ITDE. N-linked (GlcNAc...) asparagine glycans are attached at residues Asn528, Asn592, and Asn667. Residues 708-734 are disordered; the sequence is DDFGSPTRKASILDSSPNSRKRSSTSV.

The protein belongs to the ACDP family.

The protein resides in the cell membrane. Its function is as follows. Probable metal transporter. Probably acts redundantly with the other metal transport proteins cnnm-1, cnnm-3, cnnm-4 and cnnm-5 to regulate Mg(2+) homeostasis. The polypeptide is Metal transporter cnnm-2 (Caenorhabditis elegans).